The primary structure comprises 613 residues: Dihydroxy-acid dehydratase (613 aa).

Residue aspartate 81 coordinates Mg(2+). Cysteine 122 provides a ligand contact to [2Fe-2S] cluster. Positions 123 and 124 each coordinate Mg(2+). Lysine 124 carries the N6-carboxylysine modification. Cysteine 195 contacts [2Fe-2S] cluster. Glutamate 491 is a Mg(2+) binding site. Serine 517 acts as the Proton acceptor in catalysis.

The protein belongs to the IlvD/Edd family. Homodimer. Requires [2Fe-2S] cluster as cofactor. Mg(2+) is required as a cofactor.

The enzyme catalyses (2R)-2,3-dihydroxy-3-methylbutanoate = 3-methyl-2-oxobutanoate + H2O. It carries out the reaction (2R,3R)-2,3-dihydroxy-3-methylpentanoate = (S)-3-methyl-2-oxopentanoate + H2O. It participates in amino-acid biosynthesis; L-isoleucine biosynthesis; L-isoleucine from 2-oxobutanoate: step 3/4. Its pathway is amino-acid biosynthesis; L-valine biosynthesis; L-valine from pyruvate: step 3/4. Its function is as follows. Functions in the biosynthesis of branched-chain amino acids. Catalyzes the dehydration of (2R,3R)-2,3-dihydroxy-3-methylpentanoate (2,3-dihydroxy-3-methylvalerate) into 2-oxo-3-methylpentanoate (2-oxo-3-methylvalerate) and of (2R)-2,3-dihydroxy-3-methylbutanoate (2,3-dihydroxyisovalerate) into 2-oxo-3-methylbutanoate (2-oxoisovalerate), the penultimate precursor to L-isoleucine and L-valine, respectively. In Vibrio cholerae serotype O1 (strain ATCC 39541 / Classical Ogawa 395 / O395), this protein is Dihydroxy-acid dehydratase.